A 343-amino-acid polypeptide reads, in one-letter code: Mitochondrial amidoxime-reducing component 1 (343 aa).

The Mitochondrial matrix portion of the chain corresponds to 1–25 (MSNTVFSGAVGPLRAAALSISRHRL). A helical; Signal-anchor for type II membrane protein transmembrane segment spans residues 26–44 (PLLCAAGLGLTAVASWMWW). Residues 45–343 (RKRQGEAEDL…DPVYRVTRKG (299 aa)) are Cytoplasmic-facing. Mo-molybdopterin contacts are provided by Lys-69, Ser-70, and Arg-94. Positions 95 to 186 (HWLVVTEEGN…SSQPYRLVHF (92 aa)) are MOSC N-terminal region. An MOSC domain is found at 181-339 (YRLVHFEADV…IRVGDPVYRV (159 aa)). Positions 215, 242, 276, 277, and 321 each coordinate Mo-molybdopterin.

Requires Mo-molybdopterin as cofactor.

The protein resides in the mitochondrion outer membrane. Its subcellular location is the membrane. The enzyme catalyses N(omega)-hydroxy-L-arginine + 2 Fe(II)-[cytochrome b5] + 2 H(+) = L-arginine + 2 Fe(III)-[cytochrome b5] + H2O. In terms of biological role, catalyzes the reduction of N-oxygenated molecules, acting as a counterpart of cytochrome P450 and flavin-containing monooxygenases in metabolic cycles. As a component of prodrug-converting system, reduces a multitude of N-hydroxylated prodrugs particularly amidoximes, leading to increased drug bioavailability. May be involved in mitochondrial N(omega)-hydroxy-L-arginine (NOHA) reduction, regulating endogenous nitric oxide levels and biosynthesis. Postulated to cleave the N-OH bond of N-hydroxylated substrates in concert with electron transfer from NADH to cytochrome b5 reductase then to cytochrome b5, the ultimate electron donor that primes the active site for substrate reduction. The protein is Mitochondrial amidoxime-reducing component 1 (mtarc1) of Xenopus laevis (African clawed frog).